A 152-amino-acid chain; its full sequence is MSTHHVFVYGSLKKGQPNHHELLNSNNGQAEFITCAQTKEPYPLVIATKHNIPFLLNVPGSGKQVSGEIYSVDQKMLEFLDWFEKCPDWYQRTSIQLEILKGNGESGRIEEASVYSKINFEPDWLNKPTHESYDTNGDHGLKFVCREDRKDD.

A substrate-binding site is contributed by 9–12 (YGSL). Glu-84 acts as the Proton acceptor in catalysis.

It belongs to the gamma-glutamylcyclotransferase family.

The catalysed reaction is epsilon-(gamma-L-glutamyl)-L-lysine = 5-oxo-L-proline + L-lysine. In terms of biological role, may contribute to degradation of proteins cross-linked by transglutaminases by degrading the cross-link between a lysine and a glutamic acid residue. Catalyzes the formation of 5-oxo-L-proline from L-gamma-glutamyl-L-epsilon-lysine. This chain is Gamma-glutamylaminecyclotransferase C (ggact.3), found in Danio rerio (Zebrafish).